Here is a 279-residue protein sequence, read N- to C-terminus: Pantothenate synthetase (279 aa).

26-33 (MGNLHEGH) is a binding site for ATP. H33 (proton donor) is an active-site residue. Residue Q57 coordinates (R)-pantoate. A beta-alanine-binding site is contributed by Q57. 144–147 (GKKD) lines the ATP pocket. Q150 is a binding site for (R)-pantoate. Residues V173 and 181–184 (LSSR) contribute to the ATP site.

It belongs to the pantothenate synthetase family. As to quaternary structure, homodimer.

Its subcellular location is the cytoplasm. It catalyses the reaction (R)-pantoate + beta-alanine + ATP = (R)-pantothenate + AMP + diphosphate + H(+). The protein operates within cofactor biosynthesis; (R)-pantothenate biosynthesis; (R)-pantothenate from (R)-pantoate and beta-alanine: step 1/1. In terms of biological role, catalyzes the condensation of pantoate with beta-alanine in an ATP-dependent reaction via a pantoyl-adenylate intermediate. The polypeptide is Pantothenate synthetase (Burkholderia vietnamiensis (strain G4 / LMG 22486) (Burkholderia cepacia (strain R1808))).